The chain runs to 581 residues: Adenine deaminase (581 aa).

Belongs to the metallo-dependent hydrolases superfamily. Adenine deaminase family. Mn(2+) serves as cofactor.

It carries out the reaction adenine + H2O + H(+) = hypoxanthine + NH4(+). This is Adenine deaminase from Lysinibacillus sphaericus (strain C3-41).